The chain runs to 443 residues: Endothelin receptor type B (443 aa).

The N-terminal stretch at 1–26 is a signal peptide; sequence MQPLRSLCGRALVALIFACGVAGVQS. Over 27–102 the chain is Extracellular; it reads EERGFPPAGA…GPIEIKDTFK (76 aa). Residues 53 to 89 form a disordered region; the sequence is TFWPRGSNASLPRSSSPPQMPKGGRMAGPPARTLTPP. Residues 59 to 69 show a composition bias toward polar residues; the sequence is SNASLPRSSSP. A glycan (N-linked (GlcNAc...) asparagine) is linked at N60. Residues 103-127 form a helical membrane-spanning segment; it reads YINTVVSCLVFVLGIIGNSTLLRII. Over 128-138 the chain is Cytoplasmic; the sequence is YKNKCMRNGPN. A helical transmembrane segment spans residues 139–164; the sequence is ILIASLALGDLLHIIIDIPINVYKLL. Over 165–176 the chain is Extracellular; sequence AEDWPFGVEMCK. An intrachain disulfide couples C175 to C256. The chain crosses the membrane as a helical span at residues 177-198; sequence LVPFIQKASVGITVLSLCALSI. The Cytoplasmic portion of the chain corresponds to 199–219; it reads DRYRAVASWSRIKGIGVPKWT. A helical membrane pass occupies residues 220–244; sequence AVEIVLIWVVSVVLAVPEALGFDMI. At 245–272 the chain is on the extracellular side; the sequence is TTDYKGNRLRICLLHPTQKTAFMQFYKT. A helical transmembrane segment spans residues 273 to 297; it reads AKDWWLFSFYFCLPLAITAFFYTLM. Residues 298 to 325 lie on the Cytoplasmic side of the membrane; sequence TCEMLRKKSGMQIALNDHLKQRREVAKT. S306 is subject to Phosphoserine. Residues 326–351 traverse the membrane as a helical segment; that stretch reads VFCLVLVFALCWLPLHLSRILKLTLY. Over 352 to 363 the chain is Extracellular; it reads DQNDSNRCELLS. N-linked (GlcNAc...) asparagine glycosylation occurs at N354. The helical transmembrane segment at 364 to 390 threads the bilayer; the sequence is FLLVLDYIGINMASLNSCINPIALYLV. Topologically, residues 391-443 are cytoplasmic; that stretch reads SKRFKNCFKSCLCCWCQSFEEKQSLEEKQSCLKFKANDHGYDNFRSSNKYSSS. S-palmitoyl cysteine attachment occurs at residues C403, C404, and C406. S420 carries the phosphoserine modification. Phosphotyrosine is present on Y440. A phosphoserine mark is found at S441, S442, and S443.

It belongs to the G-protein coupled receptor 1 family. Endothelin receptor subfamily. EDNRB sub-subfamily.

The protein resides in the cell membrane. In terms of biological role, non-specific receptor for endothelin 1, 2, and 3. Mediates its action by association with G proteins that activate a phosphatidylinositol-calcium second messenger system. The protein is Endothelin receptor type B (EDNRB) of Sus scrofa (Pig).